Here is a 455-residue protein sequence, read N- to C-terminus: tRNA modification GTPase MnmE (455 aa).

The (6S)-5-formyl-5,6,7,8-tetrahydrofolate site is built by arginine 24, glutamate 86, and arginine 125. The 157-residue stretch at 220–376 folds into the TrmE-type G domain; it reads GLTVAIIGRP…LETAILETVQ (157 aa). Asparagine 230 is a K(+) binding site. GTP contacts are provided by residues 230–235, 249–255, and 274–277; these read NVGKSS, TDLPGTT, and DTAG. Residue serine 234 participates in Mg(2+) binding. K(+)-binding residues include threonine 249, leucine 251, and threonine 254. Threonine 255 is a binding site for Mg(2+). Lysine 455 is a (6S)-5-formyl-5,6,7,8-tetrahydrofolate binding site.

This sequence belongs to the TRAFAC class TrmE-Era-EngA-EngB-Septin-like GTPase superfamily. TrmE GTPase family. As to quaternary structure, homodimer. Heterotetramer of two MnmE and two MnmG subunits. K(+) is required as a cofactor.

The protein resides in the cytoplasm. Functionally, exhibits a very high intrinsic GTPase hydrolysis rate. Involved in the addition of a carboxymethylaminomethyl (cmnm) group at the wobble position (U34) of certain tRNAs, forming tRNA-cmnm(5)s(2)U34. The protein is tRNA modification GTPase MnmE of Acaryochloris marina (strain MBIC 11017).